Reading from the N-terminus, the 66-residue chain is MIRILVLMITFTLMTGSALCSIEQLMRVFGGGSVGGGSRLDINRRVTIVPPEGELSFGYGFRPGFY.

Residues 1-20 form the signal peptide; sequence MIRILVLMITFTLMTGSALC.

Specifically expressed in the ejaculatory bulb and seminal fluid.

The protein resides in the secreted. In terms of biological role, protein component of the posterior mating plug. This is Ejaculatory bulb-specific protein 2 from Drosophila melanogaster (Fruit fly).